The chain runs to 463 residues: Dipeptidyl peptidase 1 (463 aa).

Positions 1 to 24 (MGVGPASLLAALLLLLSGDRAVRC) are cleaved as a signal peptide. N29, N53, and N119 each carry an N-linked (GlcNAc...) asparagine glycan. 5 disulfides stabilise this stretch: C30–C118, C54–C136, C255–C298, C291–C331, and C321–C337. The propeptide occupies 135 to 230 (ACFTGKKVGT…TAEIQQKILH (96 aa)). The active site involves C258. N276 carries an N-linked (GlcNAc...) asparagine glycan. Chloride contacts are provided by F302 and Y304. Y347 lines the chloride pocket. Catalysis depends on residues H405 and N427.

The protein belongs to the peptidase C1 family. Tetramer of heterotrimers consisting of exclusion domain, heavy- and light chains. Requires chloride as cofactor.

Its subcellular location is the lysosome. The enzyme catalyses Release of an N-terminal dipeptide, Xaa-Yaa-|-Zaa-, except when Xaa is Arg or Lys, or Yaa or Zaa is Pro.. Functionally, thiol protease. Has dipeptidylpeptidase activity. Active against a broad range of dipeptide substrates composed of both polar and hydrophobic amino acids. Proline cannot occupy the P1 position and arginine cannot occupy the P2 position of the substrate. Can act as both an exopeptidase and endopeptidase. Activates serine proteases such as elastase, cathepsin G and granzymes A and B. The protein is Dipeptidyl peptidase 1 (CTSC) of Macaca fascicularis (Crab-eating macaque).